Consider the following 542-residue polypeptide: 3-(3-hydroxy-phenyl)propionate/3-hydroxycinnamic acid hydroxylase (542 aa).

FAD contacts are provided by residues 10–39 (SVAIVGAGPNGAAMANLLGLYGVDTIVVER) and 278–288 (FVAGRVALIGD).

The protein belongs to the PheA/TfdB FAD monooxygenase family. It depends on FAD as a cofactor.

The enzyme catalyses 3-(3-hydroxyphenyl)propanoate + NADH + O2 + H(+) = 3-(2,3-dihydroxyphenyl)propanoate + NAD(+) + H2O. It carries out the reaction (2E)-3-(3-hydroxyphenyl)prop-2-enoate + NADH + O2 + H(+) = (2E)-3-(2,3-dihydroxyphenyl)prop-2-enoate + NAD(+) + H2O. Its pathway is aromatic compound metabolism; 3-phenylpropanoate degradation. Catalyzes the insertion of one atom of molecular oxygen into position 2 of the phenyl ring of 3-(3-hydroxyphenyl)propionate (3-HPP) and hydroxycinnamic acid (3HCI). This is 3-(3-hydroxy-phenyl)propionate/3-hydroxycinnamic acid hydroxylase from Burkholderia cenocepacia (strain HI2424).